The primary structure comprises 221 residues: MDIFKYDVYRGPNIGIYTSANDEKIFLPRGFAKAKAARLEGYLGAEALYTSVANTRLMGTLMVLNNSGIIMPSTISEIEYEFYKKHTDLNVVVLDTKFTALGNMISVNDRGGVVSPVFPREEVRIIADALGIEVIQRRIAGYNQVGAMMVATSGGGIIHPETDGEDVKRISEVMGVHMEPATINGGIPFVSSGLLANKKSVVAGSFTSGPEIMMLTRAFAG.

This sequence belongs to the eIF-6 family.

Binds to the 50S ribosomal subunit and prevents its association with the 30S ribosomal subunit to form the 70S initiation complex. The protein is Translation initiation factor 6 of Cenarchaeum symbiosum (strain A).